The chain runs to 113 residues: Putative pterin-4-alpha-carbinolamine dehydratase (113 aa).

Belongs to the pterin-4-alpha-carbinolamine dehydratase family.

The enzyme catalyses (4aS,6R)-4a-hydroxy-L-erythro-5,6,7,8-tetrahydrobiopterin = (6R)-L-erythro-6,7-dihydrobiopterin + H2O. The chain is Putative pterin-4-alpha-carbinolamine dehydratase from Idiomarina loihiensis (strain ATCC BAA-735 / DSM 15497 / L2-TR).